The sequence spans 191 residues: Elongation factor P (191 aa).

This sequence belongs to the elongation factor P family.

The protein localises to the cytoplasm. Its pathway is protein biosynthesis; polypeptide chain elongation. Involved in peptide bond synthesis. Stimulates efficient translation and peptide-bond synthesis on native or reconstituted 70S ribosomes in vitro. Probably functions indirectly by altering the affinity of the ribosome for aminoacyl-tRNA, thus increasing their reactivity as acceptors for peptidyl transferase. The protein is Elongation factor P of Ralstonia pickettii (strain 12J).